The sequence spans 468 residues: Kynureninase 2 (468 aa).

Pyridoxal 5'-phosphate contacts are provided by residues Leu-134, Thr-135, 162–165, Asp-247, His-250, and Tyr-272; that span reads FPSD. Position 273 is an N6-(pyridoxal phosphate)lysine (Lys-273). Trp-312 and Asn-340 together coordinate pyridoxal 5'-phosphate.

Belongs to the kynureninase family. In terms of assembly, homodimer. Pyridoxal 5'-phosphate is required as a cofactor.

The protein localises to the cytoplasm. The catalysed reaction is L-kynurenine + H2O = anthranilate + L-alanine + H(+). It catalyses the reaction 3-hydroxy-L-kynurenine + H2O = 3-hydroxyanthranilate + L-alanine + H(+). It functions in the pathway amino-acid degradation; L-kynurenine degradation; L-alanine and anthranilate from L-kynurenine: step 1/1. It participates in cofactor biosynthesis; NAD(+) biosynthesis; quinolinate from L-kynurenine: step 2/3. Its function is as follows. Catalyzes the cleavage of L-kynurenine (L-Kyn) and L-3-hydroxykynurenine (L-3OHKyn) into anthranilic acid (AA) and 3-hydroxyanthranilic acid (3-OHAA), respectively. This chain is Kynureninase 2 (bna5-2), found in Aspergillus oryzae (strain ATCC 42149 / RIB 40) (Yellow koji mold).